Reading from the N-terminus, the 119-residue chain is Large ribosomal subunit protein uL18 (119 aa).

The interval 1 to 24 is disordered; it reads MITKQDKNQVRKKRHARVRSKISG. Basic residues predominate over residues 10 to 20; it reads VRKKRHARVRS.

Belongs to the universal ribosomal protein uL18 family. Part of the 50S ribosomal subunit; part of the 5S rRNA/L5/L18/L25 subcomplex. Contacts the 5S and 23S rRNAs.

Its function is as follows. This is one of the proteins that bind and probably mediate the attachment of the 5S RNA into the large ribosomal subunit, where it forms part of the central protuberance. The sequence is that of Large ribosomal subunit protein uL18 from Lysinibacillus sphaericus (strain C3-41).